A 223-amino-acid polypeptide reads, in one-letter code: Endonuclease NucS (223 aa).

This sequence belongs to the NucS endonuclease family.

It localises to the cytoplasm. Cleaves both 3' and 5' ssDNA extremities of branched DNA structures. The polypeptide is Endonuclease NucS (Streptomyces griseus subsp. griseus (strain JCM 4626 / CBS 651.72 / NBRC 13350 / KCC S-0626 / ISP 5235)).